Reading from the N-terminus, the 219-residue chain is Kynurenine formamidase (219 aa).

Trp28 contributes to the substrate binding site. Residues His58, His62, and Asp64 each coordinate Zn(2+). The active-site Proton donor/acceptor is the His68. Residues His170 and Glu182 each coordinate Zn(2+).

Belongs to the Cyclase 1 superfamily. KynB family. In terms of assembly, homodimer. Zn(2+) is required as a cofactor.

It carries out the reaction N-formyl-L-kynurenine + H2O = L-kynurenine + formate + H(+). It functions in the pathway amino-acid degradation; L-tryptophan degradation via kynurenine pathway; L-kynurenine from L-tryptophan: step 2/2. Its function is as follows. Catalyzes the hydrolysis of N-formyl-L-kynurenine to L-kynurenine, the second step in the kynurenine pathway of tryptophan degradation. This Cupriavidus pinatubonensis (strain JMP 134 / LMG 1197) (Cupriavidus necator (strain JMP 134)) protein is Kynurenine formamidase.